Consider the following 530-residue polypeptide: Ataxin-10 homolog (530 aa).

Belongs to the ataxin-10 family.

It localises to the cytoplasm. May play a role in the regulation of cytokinesis. This chain is Ataxin-10 homolog (CTR86), found in Candida glabrata (strain ATCC 2001 / BCRC 20586 / JCM 3761 / NBRC 0622 / NRRL Y-65 / CBS 138) (Yeast).